We begin with the raw amino-acid sequence, 460 residues long: 3-isopropylmalate dehydratase large subunit (460 aa).

Residues cysteine 341, cysteine 401, and cysteine 404 each coordinate [4Fe-4S] cluster.

Belongs to the aconitase/IPM isomerase family. LeuC type 1 subfamily. In terms of assembly, heterodimer of LeuC and LeuD. Requires [4Fe-4S] cluster as cofactor.

The enzyme catalyses (2R,3S)-3-isopropylmalate = (2S)-2-isopropylmalate. The protein operates within amino-acid biosynthesis; L-leucine biosynthesis; L-leucine from 3-methyl-2-oxobutanoate: step 2/4. Catalyzes the isomerization between 2-isopropylmalate and 3-isopropylmalate, via the formation of 2-isopropylmaleate. This chain is 3-isopropylmalate dehydratase large subunit, found in Phocaeicola vulgatus (strain ATCC 8482 / DSM 1447 / JCM 5826 / CCUG 4940 / NBRC 14291 / NCTC 11154) (Bacteroides vulgatus).